Reading from the N-terminus, the 362-residue chain is Phospho-N-acetylmuramoyl-pentapeptide-transferase (362 aa).

A run of 10 helical transmembrane segments spans residues glycine 28–leucine 48, threonine 75–leucine 95, valine 100–leucine 120, alanine 134–glutamine 154, valine 170–glycine 190, glycine 201–valine 221, leucine 241–proline 261, valine 265–valine 285, leucine 290–valine 310, and threonine 339–leucine 359.

It belongs to the glycosyltransferase 4 family. MraY subfamily. Mg(2+) serves as cofactor.

The protein resides in the cell inner membrane. It catalyses the reaction UDP-N-acetyl-alpha-D-muramoyl-L-alanyl-gamma-D-glutamyl-meso-2,6-diaminopimeloyl-D-alanyl-D-alanine + di-trans,octa-cis-undecaprenyl phosphate = di-trans,octa-cis-undecaprenyl diphospho-N-acetyl-alpha-D-muramoyl-L-alanyl-D-glutamyl-meso-2,6-diaminopimeloyl-D-alanyl-D-alanine + UMP. It participates in cell wall biogenesis; peptidoglycan biosynthesis. Catalyzes the initial step of the lipid cycle reactions in the biosynthesis of the cell wall peptidoglycan: transfers peptidoglycan precursor phospho-MurNAc-pentapeptide from UDP-MurNAc-pentapeptide onto the lipid carrier undecaprenyl phosphate, yielding undecaprenyl-pyrophosphoryl-MurNAc-pentapeptide, known as lipid I. This chain is Phospho-N-acetylmuramoyl-pentapeptide-transferase, found in Paramagnetospirillum magneticum (strain ATCC 700264 / AMB-1) (Magnetospirillum magneticum).